The chain runs to 120 residues: NAD(P)H-quinone oxidoreductase subunit 3, chloroplastic (120 aa).

Helical transmembrane passes span 9–29, 64–84, and 88–108; these read IFWT…WISG, MFAL…PWAM, and VLGV…VVGL.

This sequence belongs to the complex I subunit 3 family. NDH is composed of at least 16 different subunits, 5 of which are encoded in the nucleus.

It is found in the plastid. The protein resides in the chloroplast thylakoid membrane. It catalyses the reaction a plastoquinone + NADH + (n+1) H(+)(in) = a plastoquinol + NAD(+) + n H(+)(out). The enzyme catalyses a plastoquinone + NADPH + (n+1) H(+)(in) = a plastoquinol + NADP(+) + n H(+)(out). Its function is as follows. NDH shuttles electrons from NAD(P)H:plastoquinone, via FMN and iron-sulfur (Fe-S) centers, to quinones in the photosynthetic chain and possibly in a chloroplast respiratory chain. The immediate electron acceptor for the enzyme in this species is believed to be plastoquinone. Couples the redox reaction to proton translocation, and thus conserves the redox energy in a proton gradient. The protein is NAD(P)H-quinone oxidoreductase subunit 3, chloroplastic of Zea mays (Maize).